Here is a 581-residue protein sequence, read N- to C-terminus: Myoneurin (581 aa).

The region spanning 24-89 (CDCTIVIGEF…IYTGTLNLDS (66 aa)) is the BTB domain. A disordered region spans residues 167–193 (PKQGALAKKSSQTKKKKKAFNSQKTGQ). Short sequence motifs (nuclear localization signal) lie at residues 174-190 (KKSS…NSQK) and 256-261 (KRKRGK). S288 carries the post-translational modification Phosphoserine. 7 C2H2-type zinc fingers span residues 301–323 (PMCN…MRIH), 329–351 (YVCH…VRTH), 357–380 (YKCE…RMHH), 386–408 (YKCD…ARKH), 414–436 (YVCD…VRRH), 442–464 (YVCD…SRKH), and 470–493 (FICE…TKVH).

The protein belongs to the krueppel C2H2-type zinc-finger protein family.

The protein resides in the nucleus. The protein is Myoneurin (MYNN) of Bos taurus (Bovine).